The primary structure comprises 72 residues: Translation initiation factor IF-1 (72 aa).

The S1-like domain occupies 1–72 (MAKEDVIEIE…TRGRITYRFK (72 aa)).

The protein belongs to the IF-1 family. Component of the 30S ribosomal translation pre-initiation complex which assembles on the 30S ribosome in the order IF-2 and IF-3, IF-1 and N-formylmethionyl-tRNA(fMet); mRNA recruitment can occur at any time during PIC assembly.

The protein localises to the cytoplasm. In terms of biological role, one of the essential components for the initiation of protein synthesis. Stabilizes the binding of IF-2 and IF-3 on the 30S subunit to which N-formylmethionyl-tRNA(fMet) subsequently binds. Helps modulate mRNA selection, yielding the 30S pre-initiation complex (PIC). Upon addition of the 50S ribosomal subunit IF-1, IF-2 and IF-3 are released leaving the mature 70S translation initiation complex. This Streptococcus suis (strain 05ZYH33) protein is Translation initiation factor IF-1.